The sequence spans 876 residues: DNA mismatch repair protein MutS (876 aa).

An ATP-binding site is contributed by 628 to 635; that stretch reads GPNMAGKS.

The protein belongs to the DNA mismatch repair MutS family.

Functionally, this protein is involved in the repair of mismatches in DNA. It is possible that it carries out the mismatch recognition step. This protein has a weak ATPase activity. In Chlorobaculum parvum (strain DSM 263 / NCIMB 8327) (Chlorobium vibrioforme subsp. thiosulfatophilum), this protein is DNA mismatch repair protein MutS.